The sequence spans 152 residues: Protein-export protein SecB (152 aa).

This sequence belongs to the SecB family. In terms of assembly, homotetramer, a dimer of dimers. One homotetramer interacts with 1 SecA dimer.

It localises to the cytoplasm. Its function is as follows. One of the proteins required for the normal export of preproteins out of the cell cytoplasm. It is a molecular chaperone that binds to a subset of precursor proteins, maintaining them in a translocation-competent state. It also specifically binds to its receptor SecA. This Verminephrobacter eiseniae (strain EF01-2) protein is Protein-export protein SecB.